Consider the following 810-residue polypeptide: Nuclear pore complex protein NUP88 (810 aa).

The disordered stretch occupies residues 1-23 (MKFNFNETEDAPDSRRSPTPKEP). The stretch at 646–748 (APNLKRIIDD…RARVKKSTQK (103 aa)) forms a coiled coil.

Part of the nuclear pore complex (NPC). The NPC has an eight-fold symmetrical structure comprising a central transport channel and two rings, the cytoplasmic and nuclear rings, to which eight filaments are attached. The cytoplasmic filaments have loose ends, while the nuclear filaments are joined in a distal ring, forming a nuclear basket. NPCs are highly dynamic in configuration and composition, and can be devided in 3 subcomplexes, the NUP62 subcomplex, the NUP107-160 subcomplex and the NUP93 subcomplex, containing approximately 30 different nucleoporin proteins.

It localises to the nucleus envelope. The protein resides in the nucleus. The protein localises to the nuclear pore complex. Its function is as follows. Involved in the regulation of exportin-mediated nuclear protein export. Required for resistance mediated by multiple R proteins and for the appropriate nuclear accumulation of SNC1 and of the downstream defense signaling components EDS1 and NPR1. Not involved in salt tolerance, ethylene and auxin responses, but required for systemic acquired resistance. The polypeptide is Nuclear pore complex protein NUP88 (Arabidopsis thaliana (Mouse-ear cress)).